The sequence spans 168 residues: Cyclic pyranopterin monophosphate synthase (168 aa).

Residues 81–83 and 117–118 contribute to the substrate site; these read LCH and ME. The active site involves D132.

This sequence belongs to the MoaC family. Homohexamer; trimer of dimers.

The catalysed reaction is (8S)-3',8-cyclo-7,8-dihydroguanosine 5'-triphosphate = cyclic pyranopterin phosphate + diphosphate. It functions in the pathway cofactor biosynthesis; molybdopterin biosynthesis. Catalyzes the conversion of (8S)-3',8-cyclo-7,8-dihydroguanosine 5'-triphosphate to cyclic pyranopterin monophosphate (cPMP). The polypeptide is Cyclic pyranopterin monophosphate synthase (Deinococcus radiodurans (strain ATCC 13939 / DSM 20539 / JCM 16871 / CCUG 27074 / LMG 4051 / NBRC 15346 / NCIMB 9279 / VKM B-1422 / R1)).